The following is a 233-amino-acid chain: Ribose-5-phosphate isomerase A (233 aa).

Substrate-binding positions include 31–34, 87–90, and 100–103; these read SGST, DGAD, and KGGG. The active-site Proton acceptor is the E109. K127 contributes to the substrate binding site.

This sequence belongs to the ribose 5-phosphate isomerase family. As to quaternary structure, homodimer.

It catalyses the reaction aldehydo-D-ribose 5-phosphate = D-ribulose 5-phosphate. Its pathway is carbohydrate degradation; pentose phosphate pathway; D-ribose 5-phosphate from D-ribulose 5-phosphate (non-oxidative stage): step 1/1. Its function is as follows. Catalyzes the reversible conversion of ribose-5-phosphate to ribulose 5-phosphate. The sequence is that of Ribose-5-phosphate isomerase A from Chlamydia felis (strain Fe/C-56) (Chlamydophila felis).